A 584-amino-acid chain; its full sequence is Negative regulator of RAS-cAMP pathway (584 aa).

Thr-25 is modified (phosphothreonine). Disordered regions lie at residues Pro-95–Ser-167, Pro-209–Ser-279, Ser-291–Asn-320, Asn-343–Val-366, and Ser-381–Thr-432. Composition is skewed to polar residues over residues Pro-114–Met-127, Cys-229–Gln-254, and Asn-267–Thr-278. Residues Ser-247 and Ser-276 each carry the phosphoserine modification. A compositionally biased stretch (acidic residues) spans Phe-307–Asn-320. Positions Asn-343 to His-363 are enriched in polar residues. Low complexity predominate over residues Ser-381–Glu-392. Residues Val-398–Thr-432 are compositionally biased toward polar residues. Ser-442 is subject to Phosphoserine. Position 518 is a phosphoserine; by PKA (Ser-518). Positions Asp-551–Ile-584 are disordered. Over residues Asn-557–Asn-568 the composition is skewed to low complexity.

Its subcellular location is the nucleus. Negative regulator of Ras-cAMP pathway. Involved in transcriptional regulation of galactose-inducible genes. The sequence is that of Negative regulator of RAS-cAMP pathway (MKS1) from Saccharomyces cerevisiae (strain ATCC 204508 / S288c) (Baker's yeast).